The chain runs to 108 residues: Parvalbumin beta 2 (108 aa).

Ser-2 carries the post-translational modification N-acetylserine. 2 consecutive EF-hand domains span residues 38 to 73 (KSSD…FSAS) and 77 to 108 (LTDA…MIKG). 11 residues coordinate Ca(2+): Asp-51, Asp-53, Ser-55, Phe-57, Glu-59, Glu-62, Asp-90, Asp-92, Asp-94, Met-96, and Glu-101.

The protein belongs to the parvalbumin family.

Functionally, in muscle, parvalbumin is thought to be involved in relaxation after contraction. It binds two calcium ions. In Salmo salar (Atlantic salmon), this protein is Parvalbumin beta 2.